A 455-amino-acid chain; its full sequence is Inactive peptidyl-prolyl cis-trans isomerase shutdown (455 aa).

The tract at residues 34 to 54 (SQQNHARDLGLDSDSDSDYED) is disordered. Over residues 44 to 54 (LDSDSDSDYED) the composition is skewed to acidic residues. Residues 103-192 (KARVSVRYSG…LFKVEVIDYS (90 aa)) form the PPIase FKBP-type domain. TPR repeat units lie at residues 218 to 251 (AVDLHLHGKDSVKLGRYQSAATAFERAVSSLNYC) and 303 to 336 (CKALFQEGRALAALGEYNLARNAYLQAQAKQPAN).

The protein belongs to the FKBP6 family. Interacts with Hsp83. As to expression, strongly expressed in the germline stem cells and in 16-cell cysts. Present in the germ cells throughout embryogenesis. Defects are due to derepression of transposable elements and impaired piRNA biogenesis.

Its subcellular location is the cytoplasm. It localises to the cytoplasmic ribonucleoprotein granule. Functionally, co-chaperone required during oogenesis to repress transposable elements and prevent their mobilization, which is essential for the germline integrity. Acts via the piRNA metabolic process, which mediates the repression of transposable elements during meiosis by forming complexes composed of piRNAs and Piwi proteins and govern the methylation and subsequent repression of transposons. Acts as a co-chaperone via its interaction with Hsp83/HSP90 and is required for the biogenesis of all three piRNA major populations. In Drosophila melanogaster (Fruit fly), this protein is Inactive peptidyl-prolyl cis-trans isomerase shutdown.